A 620-amino-acid chain; its full sequence is Long-chain fatty acid transport protein 2 (620 aa).

At 1–4 (MLPV) the chain is on the lumenal side. Residues 5–27 (LYTGLAGLLLLPLLLTCCCPYLL) traverse the membrane as a helical segment. The Cytoplasmic segment spans residues 28–106 (QDVRFFLQLA…DHLGLRQGDC (79 aa)). The chain crosses the membrane as a helical span at residues 107-127 (VALFMGNEPAYVWLWLGLLKL). The Lumenal segment spans residues 128-267 (GCPMACLNYN…DVIYTTMPLY (140 aa)). 222 to 233 (YIYTSGTTGLPK) contributes to the AMP binding site. The helical transmembrane segment at 268–288 (HSAALMIGLHGCIVVGATFAL) threads the bilayer. Residues 289-620 (RSKFSASQFW…NAIIDKTLKL (332 aa)) lie on the Cytoplasmic side of the membrane. Residue K291 is modified to N6-acetyllysine. At T577 the chain carries Phosphothreonine.

The protein belongs to the ATP-dependent AMP-binding enzyme family. Liver and kidney (at protein level).

The protein localises to the endoplasmic reticulum membrane. It localises to the peroxisome membrane. It is found in the cell membrane. The protein resides in the microsome. It carries out the reaction a fatty acid(in) = a fatty acid(out). The enzyme catalyses (9Z)-octadecenoate(out) = (9Z)-octadecenoate(in). It catalyses the reaction a long-chain fatty acid + ATP + CoA = a long-chain fatty acyl-CoA + AMP + diphosphate. The catalysed reaction is (5Z,8Z,11Z,14Z)-eicosatetraenoate + ATP + CoA = (5Z,8Z,11Z,14Z)-eicosatetraenoyl-CoA + AMP + diphosphate. It carries out the reaction (9Z,12Z,15Z)-octadecatrienoate + ATP + CoA = (9Z,12Z,15Z)-octadecatrienoyl-CoA + AMP + diphosphate. The enzyme catalyses hexadecanoate + ATP + CoA = hexadecanoyl-CoA + AMP + diphosphate. It catalyses the reaction (9Z)-octadecenoate + ATP + CoA = (9Z)-octadecenoyl-CoA + AMP + diphosphate. The catalysed reaction is 2,6,10,14-tetramethylpentadecanoate + ATP + CoA = pristanoyl-CoA + AMP + diphosphate. It carries out the reaction (E)-hexadec-2-enoate + ATP + CoA = (2E)-hexadecenoyl-CoA + AMP + diphosphate. The enzyme catalyses 3,7,11,15-tetramethylhexadecanoate + ATP + CoA = phytanoyl-CoA + AMP + diphosphate. It catalyses the reaction a very long-chain fatty acid + ATP + CoA = a very long-chain fatty acyl-CoA + AMP + diphosphate. The catalysed reaction is tetracosanoate + ATP + CoA = tetracosanoyl-CoA + AMP + diphosphate. It carries out the reaction (4Z,7Z,10Z,13Z,16Z,19Z)-docosahexaenoate + ATP + CoA = (4Z,7Z,10Z,13Z,16Z,19Z)-docosahexaenoyl-CoA + AMP + diphosphate. The enzyme catalyses (25R)-3alpha,7alpha,12alpha-trihydroxy-5beta-cholestan-26-oate + ATP + CoA = (25R)-3alpha,7alpha,12alpha-trihydroxy-5beta-cholestan-26-oyl-CoA + AMP + diphosphate. Mediates the import of long-chain fatty acids (LCFA) into the cell by facilitating their transport across cell membranes, playing an important role in hepatic fatty acid uptake. Also functions as an acyl-CoA ligase catalyzing the ATP-dependent formation of fatty acyl-CoA using LCFA and very-long-chain fatty acids (VLCFA) as substrates, which prevents fatty acid efflux from cells and might drive more fatty acid uptake. Plays a pivotal role in regulating available LCFA substrates from exogenous sources in tissues undergoing high levels of beta-oxidation or triglyceride synthesis. Can also activate branched-chain fatty acids such as phytanic acid and pristanic acid. May contribute to the synthesis of sphingosine-1-phosphate. Does not activate C24 bile acids, cholate and chenodeoxycholate. In vitro, activates 3-alpha,7-alpha,12-alpha-trihydroxy-5-beta-cholestanate (THCA), the C27 precursor of cholic acid deriving from the de novo synthesis from cholesterol. However, it is not critical for THCA activation and bile synthesis in vivo. The protein is Long-chain fatty acid transport protein 2 (Slc27a2) of Rattus norvegicus (Rat).